The primary structure comprises 653 residues: Biotin biosynthesis bifunctional protein BioWF (653 aa).

Residue Arg278 participates in substrate binding. 365 to 366 (GY) contacts pyridoxal 5'-phosphate. His390 contributes to the substrate binding site. Pyridoxal 5'-phosphate-binding positions include Ser436, 461–464 (DDAH), and 492–495 (TASK). Lys495 carries the N6-(pyridoxal phosphate)lysine modification.

It in the N-terminal section; belongs to the BioW family. The protein in the C-terminal section; belongs to the class-II pyridoxal-phosphate-dependent aminotransferase family. BioF subfamily. Homodimer. Mg(2+) is required as a cofactor. Pyridoxal 5'-phosphate serves as cofactor.

The enzyme catalyses heptanedioate + ATP + CoA = 6-carboxyhexanoyl-CoA + AMP + diphosphate. It carries out the reaction 6-carboxyhexanoyl-[ACP] + L-alanine + H(+) = (8S)-8-amino-7-oxononanoate + holo-[ACP] + CO2. Its pathway is metabolic intermediate metabolism; pimeloyl-CoA biosynthesis; pimeloyl-CoA from pimelate: step 1/1. It participates in cofactor biosynthesis; biotin biosynthesis. Functionally, catalyzes both the decarboxylative condensation of pimeloyl-[acyl-carrier protein] and L-alanine to produce 8-amino-7-oxononanoate (AON), [acyl-carrier protein], and carbon dioxide, and the transformation of pimelate into pimeloyl-CoA with concomitant hydrolysis of ATP to AMP. This chain is Biotin biosynthesis bifunctional protein BioWF, found in Cutibacterium acnes (strain DSM 16379 / KPA171202) (Propionibacterium acnes).